Reading from the N-terminus, the 224-residue chain is Large ribosomal subunit protein bL25 (224 aa).

The disordered stretch occupies residues 195–224 (TVEEVDEAAEVDAADVPATEQGTDESKDGE). Residues 197-207 (EEVDEAAEVDA) are compositionally biased toward acidic residues.

Belongs to the bacterial ribosomal protein bL25 family. CTC subfamily. Part of the 50S ribosomal subunit; part of the 5S rRNA/L5/L18/L25 subcomplex. Contacts the 5S rRNA. Binds to the 5S rRNA independently of L5 and L18.

Its function is as follows. This is one of the proteins that binds to the 5S RNA in the ribosome where it forms part of the central protuberance. In Psychrobacter cryohalolentis (strain ATCC BAA-1226 / DSM 17306 / VKM B-2378 / K5), this protein is Large ribosomal subunit protein bL25.